Here is an 88-residue protein sequence, read N- to C-terminus: MDTDTDTDTDTDTDTDTDTDVTNVEDIINEIDREKEEILKNVEIENNKNINKNHPSGYIREALVINTSSNSDSIDKEVIECISHDVGI.

Over residues 1-19 the composition is skewed to acidic residues; that stretch reads MDTDTDTDTDTDTDTDTDT. Residues 1–22 form a disordered region; sequence MDTDTDTDTDTDTDTDTDTDVT. Tandem repeats lie at residues 2–3, 4–5, 6–7, 8–9, 10–11, 12–13, 14–15, 16–17, and 18–19. The 9 X 2 AA tandem repeats of D-T stretch occupies residues 2 to 19; sequence DTDTDTDTDTDTDTDTDT.

Belongs to the orthopoxvirus OPG197 family.

This is Protein OPG197 (OPG197) from Vaccinia virus (strain Copenhagen) (VACV).